The following is a 361-amino-acid chain: Protein-L-isoaspartate O-methyltransferase domain-containing protein 2 (361 aa).

Gly-2 carries N-myristoyl glycine lipidation. Ser-64 is a catalytic residue. AdoMet binding motif regions lie at residues 85 to 94, 160 to 164, and 181 to 191; these read LNLGSGTGYL, YDRVY, and LKVGGILVMPL. The BC-box stretch occupies residues 240–250; that stretch reads VRSLQDLARIA. The disordered stretch occupies residues 303–336; sequence SNPSDDNSCEDLEEERREEEEKTPPETKPDPPVN. Residues 309–320 show a composition bias toward acidic residues; sequence NSCEDLEEERRE. Over residues 321–331 the composition is skewed to basic and acidic residues; sequence EEEKTPPETKP. Residues 345-348 are CUL-box; that stretch reads LPLP.

Belongs to the methyltransferase superfamily. L-isoaspartyl/D-aspartyl protein methyltransferase family.

Its subcellular location is the cytoplasm. May act as a substrate recognition component of an ECS (Elongin BC-CUL5-SOCS-box protein) E3 ubiquitin ligase complex which mediates the ubiquitination and subsequent proteasomal degradation of target proteins. May bind to the methyltransferase cofactor S-adenosylmethionine (AdoMet) via the N-terminal AdoMet binding motif, but probably does not display methyltransferase activity. This chain is Protein-L-isoaspartate O-methyltransferase domain-containing protein 2 (PCMTD2), found in Homo sapiens (Human).